The sequence spans 95 residues: Aspartyl/glutamyl-tRNA(Asn/Gln) amidotransferase subunit C (95 aa).

Belongs to the GatC family. Heterotrimer of A, B and C subunits.

The catalysed reaction is L-glutamyl-tRNA(Gln) + L-glutamine + ATP + H2O = L-glutaminyl-tRNA(Gln) + L-glutamate + ADP + phosphate + H(+). The enzyme catalyses L-aspartyl-tRNA(Asn) + L-glutamine + ATP + H2O = L-asparaginyl-tRNA(Asn) + L-glutamate + ADP + phosphate + 2 H(+). Functionally, allows the formation of correctly charged Asn-tRNA(Asn) or Gln-tRNA(Gln) through the transamidation of misacylated Asp-tRNA(Asn) or Glu-tRNA(Gln) in organisms which lack either or both of asparaginyl-tRNA or glutaminyl-tRNA synthetases. The reaction takes place in the presence of glutamine and ATP through an activated phospho-Asp-tRNA(Asn) or phospho-Glu-tRNA(Gln). This is Aspartyl/glutamyl-tRNA(Asn/Gln) amidotransferase subunit C from Nitrosospira multiformis (strain ATCC 25196 / NCIMB 11849 / C 71).